The sequence spans 158 residues: Putative pre-16S rRNA nuclease (158 aa).

Belongs to the YqgF nuclease family.

The protein resides in the cytoplasm. Its function is as follows. Could be a nuclease involved in processing of the 5'-end of pre-16S rRNA. This Hahella chejuensis (strain KCTC 2396) protein is Putative pre-16S rRNA nuclease.